Reading from the N-terminus, the 152-residue chain is Ribonuclease HI (152 aa).

In terms of domain architecture, RNase H type-1 spans 1 to 142 (MDSKVVIYTD…ADKLAVQGRE (142 aa)). Positions 10, 48, 70, and 134 each coordinate Mg(2+).

This sequence belongs to the RNase H family. As to quaternary structure, monomer. Requires Mg(2+) as cofactor.

The protein localises to the cytoplasm. The catalysed reaction is Endonucleolytic cleavage to 5'-phosphomonoester.. Functionally, endonuclease that specifically degrades the RNA of RNA-DNA hybrids. The chain is Ribonuclease HI from Rickettsia conorii (strain ATCC VR-613 / Malish 7).